Reading from the N-terminus, the 484-residue chain is tRNA sulfurtransferase (484 aa).

The region spanning 61 to 166 (PHLIELLQCI…DKLLFIQARH (106 aa)) is the THUMP domain. Residues 183-184 (LI), Lys265, Gly287, and Gln296 contribute to the ATP site. Cys344 and Cys456 form a disulfide bridge. The Rhodanese domain occupies 404-483 (LGENDVILDI…FNNVQVFVKA (80 aa)). Cys456 acts as the Cysteine persulfide intermediate in catalysis.

The protein belongs to the ThiI family.

The protein localises to the cytoplasm. It catalyses the reaction [ThiI sulfur-carrier protein]-S-sulfanyl-L-cysteine + a uridine in tRNA + 2 reduced [2Fe-2S]-[ferredoxin] + ATP + H(+) = [ThiI sulfur-carrier protein]-L-cysteine + a 4-thiouridine in tRNA + 2 oxidized [2Fe-2S]-[ferredoxin] + AMP + diphosphate. The catalysed reaction is [ThiS sulfur-carrier protein]-C-terminal Gly-Gly-AMP + S-sulfanyl-L-cysteinyl-[cysteine desulfurase] + AH2 = [ThiS sulfur-carrier protein]-C-terminal-Gly-aminoethanethioate + L-cysteinyl-[cysteine desulfurase] + A + AMP + 2 H(+). Its pathway is cofactor biosynthesis; thiamine diphosphate biosynthesis. In terms of biological role, catalyzes the ATP-dependent transfer of a sulfur to tRNA to produce 4-thiouridine in position 8 of tRNAs, which functions as a near-UV photosensor. Also catalyzes the transfer of sulfur to the sulfur carrier protein ThiS, forming ThiS-thiocarboxylate. This is a step in the synthesis of thiazole, in the thiamine biosynthesis pathway. The sulfur is donated as persulfide by IscS. In Actinobacillus succinogenes (strain ATCC 55618 / DSM 22257 / CCUG 43843 / 130Z), this protein is tRNA sulfurtransferase.